Reading from the N-terminus, the 330-residue chain is uncharacterized protein (330 aa).

Belongs to the ornithine cyclodeaminase/mu-crystallin family.

Its subcellular location is the cytoplasm. This is an uncharacterized protein from Schizosaccharomyces pombe (strain 972 / ATCC 24843) (Fission yeast).